The primary structure comprises 677 residues: Fermitin family homolog 1 (677 aa).

Residues 96-653 (MLRLRLPNLK…HEYIGGYIFL (558 aa)) form the FERM domain. Ser-170, Ser-179, and Ser-361 each carry phosphoserine. One can recognise a PH domain in the interval 337–433 (ESEVDEIEAA…EVVPNVNVAE (97 aa)).

Belongs to the kindlin family. In terms of assembly, interacts with the cytoplasmic domain of integrins ITGB1 and ITGB3.

Its subcellular location is the cytoplasm. The protein resides in the cytoskeleton. It localises to the cell junction. It is found in the focal adhesion. The protein localises to the cell projection. Its subcellular location is the ruffle membrane. In terms of biological role, involved in cell adhesion. Contributes to integrin activation. When coexpressed with talin, potentiates activation of ITGA2B. Required for normal keratinocyte proliferation. Required for normal polarization of basal keratinocytes in skin, and for normal cell shape. Required for normal adhesion of keratinocytes to fibronectin and laminin, and for normal keratinocyte migration to wound sites. In Pongo abelii (Sumatran orangutan), this protein is Fermitin family homolog 1 (FERMT1).